A 339-amino-acid chain; its full sequence is GDP-fucose transporter 1 (339 aa).

The next 8 helical transmembrane spans lie at 9–29 (SVRIAAVVAAYWTISISLVFL), 45–65 (LFVTWYQCVVTVICLFFLSLL), 82–102 (LSVAKQVLPLSAVFVGMITFN), 111–133 (VSFYNVGRSLTTVFNVICTYVIL), 136–156 (STSYKAVICCAVIIGGFLMGV), 165–185 (ISYSGVLFGVLASLCVSLNAI), 209–229 (ACFLFLPLMALLGEIGEVAHF), and 237–257 (FWLMMTIGGVFGIAIGYITGL). Positions 319–339 (AHTIQASKDDKALQEDGQTKV) are disordered. Residues 325 to 339 (SKDDKALQEDGQTKV) are compositionally biased toward basic and acidic residues.

Belongs to the TPT transporter family. SLC35C subfamily.

It localises to the golgi apparatus membrane. It carries out the reaction GMP(out) + GDP-beta-L-fucose(in) = GMP(in) + GDP-beta-L-fucose(out). Its function is as follows. Antiporter specific for GDP-l-fucose and depending on the concomitant reverse transport of GMP. Involved in GDP-fucose import from the cytoplasm into the Golgi lumen. This is GDP-fucose transporter 1 (slc35c1) from Nematostella vectensis (Starlet sea anemone).